The primary structure comprises 424 residues: UDP-N-acetylglucosamine 1-carboxyvinyltransferase 3 (424 aa).

Phosphoenolpyruvate is bound at residue 22-23 (KN). Arg94 contacts UDP-N-acetyl-alpha-D-glucosamine. Asp118 serves as the catalytic Proton donor. UDP-N-acetyl-alpha-D-glucosamine contacts are provided by residues 123–127 (RPVDQ), Asp306, and Leu328.

It belongs to the EPSP synthase family. MurA subfamily.

It is found in the cytoplasm. The catalysed reaction is phosphoenolpyruvate + UDP-N-acetyl-alpha-D-glucosamine = UDP-N-acetyl-3-O-(1-carboxyvinyl)-alpha-D-glucosamine + phosphate. It functions in the pathway cell wall biogenesis; peptidoglycan biosynthesis. In terms of biological role, cell wall formation. Adds enolpyruvyl to UDP-N-acetylglucosamine. This Symbiobacterium thermophilum (strain DSM 24528 / JCM 14929 / IAM 14863 / T) protein is UDP-N-acetylglucosamine 1-carboxyvinyltransferase 3.